The chain runs to 729 residues: Fatty acid oxidation complex subunit alpha (729 aa).

The segment at 1 to 189 is enoyl-CoA hydratase/isomerase; it reads MLYKGDTLYL…KIGLVDGVVK (189 aa). Asp296 serves as a coordination point for substrate. Residues 311–729 form a 3-hydroxyacyl-CoA dehydrogenase region; that stretch reads ETPKHAAVLG…ARPVGELKTA (419 aa). Residues Met324, Asp343, 400–402, Lys407, and Ser429 contribute to the NAD(+) site; that span reads VVE. His450 functions as the For 3-hydroxyacyl-CoA dehydrogenase activity in the catalytic mechanism. Asn453 lines the NAD(+) pocket. Substrate contacts are provided by Asn500 and Tyr660.

The protein in the N-terminal section; belongs to the enoyl-CoA hydratase/isomerase family. In the C-terminal section; belongs to the 3-hydroxyacyl-CoA dehydrogenase family. As to quaternary structure, heterotetramer of two alpha chains (FadB) and two beta chains (FadA).

The enzyme catalyses a (3S)-3-hydroxyacyl-CoA + NAD(+) = a 3-oxoacyl-CoA + NADH + H(+). The catalysed reaction is a (3S)-3-hydroxyacyl-CoA = a (2E)-enoyl-CoA + H2O. It catalyses the reaction a 4-saturated-(3S)-3-hydroxyacyl-CoA = a (3E)-enoyl-CoA + H2O. It carries out the reaction (3S)-3-hydroxybutanoyl-CoA = (3R)-3-hydroxybutanoyl-CoA. The enzyme catalyses a (3Z)-enoyl-CoA = a 4-saturated (2E)-enoyl-CoA. The catalysed reaction is a (3E)-enoyl-CoA = a 4-saturated (2E)-enoyl-CoA. It participates in lipid metabolism; fatty acid beta-oxidation. Its function is as follows. Involved in the aerobic and anaerobic degradation of long-chain fatty acids via beta-oxidation cycle. Catalyzes the formation of 3-oxoacyl-CoA from enoyl-CoA via L-3-hydroxyacyl-CoA. It can also use D-3-hydroxyacyl-CoA and cis-3-enoyl-CoA as substrate. This Enterobacter cloacae protein is Fatty acid oxidation complex subunit alpha.